The primary structure comprises 142 residues: Large ribosomal subunit protein uL13 (142 aa).

Belongs to the universal ribosomal protein uL13 family. In terms of assembly, part of the 50S ribosomal subunit.

In terms of biological role, this protein is one of the early assembly proteins of the 50S ribosomal subunit, although it is not seen to bind rRNA by itself. It is important during the early stages of 50S assembly. In Delftia acidovorans (strain DSM 14801 / SPH-1), this protein is Large ribosomal subunit protein uL13.